The sequence spans 190 residues: PBP1-interacting protein LSM12 (190 aa).

Residues 2–69 enclose the Sm domain; that stretch reads PVCNNDSQLI…IKEVTALRDN (68 aa). The AD domain occupies 84 to 190; sequence PSMQAARDRS…ERVQKTLSKK (107 aa).

Belongs to the LSM12 family. Forms a complex composed of at least MKT1, PBP1, XAC1 and LSM12. Forms a complex composed of at least MKT1L, PBP1, XAC1 and LSM12. Within the complex, interacts with PBP1; the interaction is direct.

Involved in post-transcriptional regulation of gene expression. The sequence is that of PBP1-interacting protein LSM12 from Trypanosoma brucei brucei (strain 927/4 GUTat10.1).